The following is a 1100-amino-acid chain: DNA repair protein RAD1 (1100 aa).

Residues methionine 1 to glutamate 47 are disordered. Residues arginine 20–lysine 30 show a composition bias toward polar residues. Residues isoleucine 31 to glutamate 47 are compositionally biased toward basic and acidic residues. Phosphoserine is present on serine 613. Residues valine 821 to glutamate 901 form the ERCC4 domain. Residues glutamate 1063–valine 1100 are disordered. Residues glutamate 1065–leucine 1076 are compositionally biased toward acidic residues. The residue at position 1071 (serine 1071) is a Phosphoserine. At threonine 1072 the chain carries Phosphothreonine. The span at threonine 1082–valine 1100 shows a compositional bias: basic and acidic residues.

Belongs to the XPF family. Component of the nucleotide excision repair factor 1 (NEF1) complex consisting of RAD1, RAD10 and RAD14. Interacts with SAW1.

It is found in the nucleus. Its function is as follows. Involved in nucleotide excision repair of DNA damaged with UV light, bulky adducts, or cross-linking agents. Along with RAD10 forms an endonuclease that specifically degrades single-stranded DNA. This is DNA repair protein RAD1 (RAD1) from Saccharomyces cerevisiae (strain ATCC 204508 / S288c) (Baker's yeast).